Here is a 681-residue protein sequence, read N- to C-terminus: Potassium-transporting ATPase ATP-binding subunit (681 aa).

4 helical membrane passes run 37 to 57, 64 to 84, 218 to 238, and 255 to 275; these read MFVV…PTYF, VGYN…ANFA, IALT…VMTL, and IALL…AIGI. Aspartate 306 serves as the catalytic 4-aspartylphosphate intermediate. ATP is bound by residues aspartate 343, glutamate 347, 375–382, and lysine 394; that span reads FSAETRMS. Aspartate 517 and aspartate 521 together coordinate Mg(2+). A run of 3 helical transmembrane segments spans residues 573 to 595, 615 to 635, and 655 to 675; these read ALTT…AIIS, AILS…PIAM, and IYGL…DMII.

This sequence belongs to the cation transport ATPase (P-type) (TC 3.A.3) family. Type IA subfamily. As to quaternary structure, the system is composed of three essential subunits: KdpA, KdpB and KdpC.

The protein resides in the cell membrane. It catalyses the reaction K(+)(out) + ATP + H2O = K(+)(in) + ADP + phosphate + H(+). Functionally, part of the high-affinity ATP-driven potassium transport (or Kdp) system, which catalyzes the hydrolysis of ATP coupled with the electrogenic transport of potassium into the cytoplasm. This subunit is responsible for energy coupling to the transport system and for the release of the potassium ions to the cytoplasm. This chain is Potassium-transporting ATPase ATP-binding subunit, found in Caldanaerobacter subterraneus subsp. tengcongensis (strain DSM 15242 / JCM 11007 / NBRC 100824 / MB4) (Thermoanaerobacter tengcongensis).